The primary structure comprises 147 residues: Protein-export protein SecB (147 aa).

Belongs to the SecB family. As to quaternary structure, homotetramer, a dimer of dimers. One homotetramer interacts with 1 SecA dimer.

The protein localises to the cytoplasm. One of the proteins required for the normal export of preproteins out of the cell cytoplasm. It is a molecular chaperone that binds to a subset of precursor proteins, maintaining them in a translocation-competent state. It also specifically binds to its receptor SecA. The sequence is that of Protein-export protein SecB from Neisseria meningitidis serogroup A / serotype 4A (strain DSM 15465 / Z2491).